Reading from the N-terminus, the 109-residue chain is Phosphoribosyl-AMP cyclohydrolase (109 aa).

Aspartate 80 contributes to the Mg(2+) binding site. Cysteine 81 provides a ligand contact to Zn(2+). Positions 82 and 84 each coordinate Mg(2+). Residues cysteine 97 and cysteine 104 each contribute to the Zn(2+) site.

It belongs to the PRA-CH family. As to quaternary structure, homodimer. Mg(2+) is required as a cofactor. Requires Zn(2+) as cofactor.

It localises to the cytoplasm. It catalyses the reaction 1-(5-phospho-beta-D-ribosyl)-5'-AMP + H2O = 1-(5-phospho-beta-D-ribosyl)-5-[(5-phospho-beta-D-ribosylamino)methylideneamino]imidazole-4-carboxamide. It functions in the pathway amino-acid biosynthesis; L-histidine biosynthesis; L-histidine from 5-phospho-alpha-D-ribose 1-diphosphate: step 3/9. Catalyzes the hydrolysis of the adenine ring of phosphoribosyl-AMP. In Clostridium botulinum (strain Alaska E43 / Type E3), this protein is Phosphoribosyl-AMP cyclohydrolase.